We begin with the raw amino-acid sequence, 882 residues long: Nitrogen regulatory protein areA (882 aa).

Positions 1-13 (MSGLTLGGGGSGG) are enriched in gly residues. Disordered regions lie at residues 1-75 (MSGL…PDSL), 139-191 (KRKE…LTSD), 228-257 (SRKD…SEFG), 325-344 (NNHS…FGLD), 394-422 (STDF…EHSM), 461-545 (NQDQ…DMNG), and 579-675 (MDTP…GPTT). Positions 48–59 (SDFSQLSDDFSF) are enriched in low complexity. Composition is skewed to polar residues over residues 156 to 169 (NSVS…QLTS) and 177 to 191 (PTRQ…LTSD). The span at 325 to 334 (NNHSSSHHNH) shows a compositional bias: basic residues. 2 stretches are compositionally biased toward polar residues: residues 394 to 413 (STDF…STPQ) and 492 to 503 (QVLNPNDFSTGA). Residues 604 to 613 (VRNREQDPRR) show a composition bias toward basic and acidic residues. Residues 617–642 (ARTTSTPNTAQLLRQSMNANTSHTSP) are compositionally biased toward polar residues. The segment at 676–700 (CTNCFTQTTPLWRRNPEGQPLCNAC) adopts a GATA-type zinc-finger fold. The tract at residues 723 to 871 (RNRSSANSLA…NHSIAGGQGA (149 aa)) is disordered. The span at 745–759 (KNSVQQTTVTTPTSS) shows a compositional bias: low complexity. Residues 795-811 (NPTTSSPGQSRGTSSVQ) are compositionally biased toward polar residues. The segment covering 848-861 (ALAPAMPPAAANPA) has biased composition (low complexity).

The protein localises to the nucleus. Its function is as follows. Major nitrogen regulatory protein. Positively acting regulatory gene of nitrogen metabolite repression. This is Nitrogen regulatory protein areA (areA) from Aspergillus niger.